Consider the following 75-residue polypeptide: U6-lycotoxin-Ls1d (75 aa).

The first 21 residues, 1 to 21 (MKLLLFTALVLVVISLVEVEA), serve as a signal peptide directing secretion. Residues 22 to 25 (ENER) constitute a propeptide that is removed on maturation.

It belongs to the neurotoxin 19 (CSTX) family. 06 (U6-Lctx) subfamily. In terms of processing, contains 4 disulfide bonds. As to expression, expressed by the venom gland.

Its subcellular location is the secreted. In Lycosa singoriensis (Wolf spider), this protein is U6-lycotoxin-Ls1d.